Reading from the N-terminus, the 299-residue chain is GTPase Era (299 aa).

In terms of domain architecture, Era-type G spans lysine 4–glutamate 171. The segment at glycine 12–serine 19 is G1. Glycine 12–serine 19 is a GTP binding site. The tract at residues residue 38 to asparagine 42 is G2. The G3 stretch occupies residues aspartate 59–glycine 62. Residues aspartate 59 to isoleucine 63 and asparagine 121 to aspartate 124 each bind GTP. The tract at residues asparagine 121 to aspartate 124 is G4. Residues isoleucine 150–alanine 152 are G5. The KH type-2 domain occupies threonine 202 to lysine 280.

The protein belongs to the TRAFAC class TrmE-Era-EngA-EngB-Septin-like GTPase superfamily. Era GTPase family. As to quaternary structure, monomer.

Its subcellular location is the cytoplasm. It is found in the cell membrane. An essential GTPase that binds both GDP and GTP, with rapid nucleotide exchange. Plays a role in 16S rRNA processing and 30S ribosomal subunit biogenesis and possibly also in cell cycle regulation and energy metabolism. The polypeptide is GTPase Era (Streptococcus pneumoniae serotype 19F (strain G54)).